Here is a 276-residue protein sequence, read N- to C-terminus: MATFRLALIQLQVSSIKSENLTRACGLIREASKQGAQIVSLPECFNSPYGTKYFPDYAEKIPGDSTQKLSEVAKECSMYVIGGSIPEKDAGKLYNTCAVFGPDGTLLVKHRKLHLFDIDVPGKITFQESETLSPGDSFSLFDTPYCRVGLGICYDIRFAELAQIYAQRGCQLLVYPGAFNLTTGPAHWELLQRGRAVDNQVYVATASPARDEKASYVAWGHSTVVNPWGEVLAKAGTEETIVYADIDLKKLAEIRQQIPIFSQKRSDLYEVEAKKS.

Residues 4-248 (FRLALIQLQV…ETIVYADIDL (245 aa)) form the CN hydrolase domain. Glutamate 43 (proton acceptor) is an active-site residue. Lysine 68 is modified (N6-acetyllysine; alternate). Lysine 68 carries the N6-succinyllysine; alternate modification. Lysine 112 acts as the Proton donor in catalysis. Lysine 123 carries the N6-succinyllysine modification. Cysteine 153 acts as the Nucleophile in catalysis.

The protein belongs to the carbon-nitrogen hydrolase superfamily. NIT1/NIT2 family. In terms of assembly, homodimer.

The protein localises to the cytoplasm. It catalyses the reaction 2-oxoglutaramate + H2O = 2-oxoglutarate + NH4(+). The enzyme catalyses 2-oxosuccinamate + H2O = oxaloacetate + NH4(+). Its function is as follows. Has omega-amidase activity. The role of omega-amidase is to remove potentially toxic intermediates by converting 2-oxoglutaramate and 2-oxosuccinamate to biologically useful 2-oxoglutarate and oxaloacetate, respectively. The chain is Omega-amidase NIT2 (NIT2) from Bos taurus (Bovine).